A 509-amino-acid chain; its full sequence is MDIRAAEISAILKEQIKNFGKEAEVSEVGQVLSVGDGIARVYGLDNVQAGEMVEFPGGIRGMALNLESDNVGVVIFGADRDIKEGDVVKRTGAIVDVPVGPELLGRVVDALGNPIDGKGPIKAKERRRVDVKAPGIIPRKSVHEPMSTGLKAIDALIPVGRGQRELVIGDRQTGKTAIILDTFLNQKPIHDNGPDKDKLYCVYVAVGQKRSTVAQFVKVLEERGALEYSIVVAATASDPAPMQYLAPFAGCAMGEYFRDNGQHALIGYDDLSKQAVAYRQMSLLLRRPPGREAYPGDVFYLHSRLLERAAKLNDENGAGSLTALPVIETQGNDVSAFIPTNVISITDGQIFLETNLFYQGIRPAVNVGLSVSRVGSSAQIKAMKQVAGSIKGELAQHREMAAFAQFGSDLDAATQRLLNRGARLTELLKQPQFSPLKTEEQVAVIYAGVNGYLDKLAVNQVGKFEEGLLASLRTEHKDVLEGIRNEKALTDDLKAKLKAAIDAFAKSFA.

169–176 (GDRQTGKT) contacts ATP.

Belongs to the ATPase alpha/beta chains family. In terms of assembly, F-type ATPases have 2 components, CF(1) - the catalytic core - and CF(0) - the membrane proton channel. CF(1) has five subunits: alpha(3), beta(3), gamma(1), delta(1), epsilon(1). CF(0) has three main subunits: a(1), b(2) and c(9-12). The alpha and beta chains form an alternating ring which encloses part of the gamma chain. CF(1) is attached to CF(0) by a central stalk formed by the gamma and epsilon chains, while a peripheral stalk is formed by the delta and b chains.

Its subcellular location is the cell inner membrane. It catalyses the reaction ATP + H2O + 4 H(+)(in) = ADP + phosphate + 5 H(+)(out). Functionally, produces ATP from ADP in the presence of a proton gradient across the membrane. The alpha chain is a regulatory subunit. The sequence is that of ATP synthase subunit alpha from Brucella suis biovar 1 (strain 1330).